The sequence spans 852 residues: Envelope glycoprotein gp160 (852 aa).

The N-terminal stretch at 1-31 (MRARETRKNYQCLWRWGTMLLGMLMICSAAE) is a signal peptide. Over 32–680 (NLWVTVYYGV…ITNWLWYIRI (649 aa)) the chain is Extracellular. C53 and C73 are disulfide-bonded. Residues N87, N129, N136, N141, N142, N155, N159, N189, and N198 are each glycosylated (N-linked (GlcNAc...) asparagine; by host). Disulfide bonds link C118/C206, C125/C197, C130/C156, C219/C248, and C229/C240. A V1 region spans residues 130 to 155 (CTDYLGNATNTNNSSGGTVEKEEIKN). A V2 region spans residues 156–197 (CSFNITTGIRDKVQKAYAYFYKLDVVPIDDDNTNTSYRLIHC). 5 N-linked (GlcNAc...) asparagine; by host glycosylation sites follow: N242, N263, N277, N290, and N296. A V3 region spans residues 297 to 330 (CTRPNNNRRRRITSGPGKVLYTTGEIIGDIRKAY). C297 and C331 are disulfide-bonded. 3 N-linked (GlcNAc...) asparagine; by host glycosylation sites follow: N332, N339, and N355. A CD4-binding loop region spans residues 363–373 (SSGGDPEIVMH). 2 disulfide bridges follow: C377–C439 and C384–C412. Residues 384–412 (CNTTKLFNSTWNENSTWNATGNDTITLPC) form a V4 region. N-linked (GlcNAc...) asparagine; by host glycans are attached at residues N385, N391, N397, N401, N405, N442, and N457. V5 regions lie at residues 455–466 (DKNSTTEIFRPA) and 457–466 (NSTTEIFRPA). Positions 507–528 (AVGVIGAMFLGFLGAAGSTMGA) are fusion peptide. The segment at 570–588 (KQLQARVLAVERYLRDQQL) is immunosuppression. C594 and C600 are disulfide-bonded. Residues N607, N612, N621, and N633 are each glycosylated (N-linked (GlcNAc...) asparagine; by host). Positions 629–663 (REIDNYTSLIYTLLEESQNQQEKNEQELLELDKWA) form a coiled coil. The tract at residues 658-679 (ELDKWASLWNWFSITNWLWYIR) is MPER; binding to GalCer. Residues 681–701 (FIMIVGGLIGLRIIFAVLSIV) traverse the membrane as a helical segment. Topologically, residues 702-852 (NRVRQGYSPL…IRQGFERALL (151 aa)) are cytoplasmic. The YXXL motif; contains endocytosis signal signature appears at 708–711 (YSPL). Residues 717–739 (IPAQRGPDRPEGIEEGGGERDRD) form a disordered region. Over residues 722-739 (GPDRPEGIEEGGGERDRD) the composition is skewed to basic and acidic residues. C760 carries the S-palmitoyl cysteine; by host lipid modification. Positions 851–852 (LL) match the Di-leucine internalization motif motif.

It belongs to the HIV-1 env protein family. As to quaternary structure, the mature envelope protein (Env) consists of a homotrimer of non-covalently associated gp120-gp41 heterodimers. The resulting complex protrudes from the virus surface as a spike. There seems to be as few as 10 spikes on the average virion. Interacts with host CD4, CCR5 and CXCR4. Gp120 also interacts with the C-type lectins CD209/DC-SIGN and CLEC4M/DC-SIGNR (collectively referred to as DC-SIGN(R)). Gp120 and gp41 interact with GalCer. Gp120 interacts with host ITGA4/ITGB7 complex; on CD4+ T-cells, this interaction results in rapid activation of integrin ITGAL/LFA-1, which facilitates efficient cell-to-cell spreading of HIV-1. Gp120 interacts with cell-associated heparan sulfate; this interaction increases virus infectivity on permissive cells and may be involved in infection of CD4- cells. In terms of assembly, the mature envelope protein (Env) consists of a homotrimer of non-covalently associated gp120-gp41 heterodimers. The resulting complex protrudes from the virus surface as a spike. There seems to be as few as 10 spikes on the average virion. In terms of processing, highly glycosylated by host. The high number of glycan on the protein is reffered to as 'glycan shield' because it contributes to hide protein sequence from adaptive immune system. Palmitoylation of the transmembrane protein and of Env polyprotein (prior to its proteolytic cleavage) is essential for their association with host cell membrane lipid rafts. Palmitoylation is therefore required for envelope trafficking to classical lipid rafts, but not for viral replication. Post-translationally, specific enzymatic cleavages in vivo yield mature proteins. Envelope glycoproteins are synthesized as an inactive precursor that is heavily N-glycosylated and processed likely by host cell furin in the Golgi to yield the mature SU and TM proteins. The cleavage site between SU and TM requires the minimal sequence [KR]-X-[KR]-R. About 2 of the 9 disulfide bonds of gp41 are reduced by P4HB/PDI, following binding to CD4 receptor.

It localises to the virion membrane. The protein resides in the host cell membrane. It is found in the host endosome membrane. Functionally, oligomerizes in the host endoplasmic reticulum into predominantly trimers. In a second time, gp160 transits in the host Golgi, where glycosylation is completed. The precursor is then proteolytically cleaved in the trans-Golgi and thereby activated by cellular furin or furin-like proteases to produce gp120 and gp41. Its function is as follows. Attaches the virus to the host lymphoid cell by binding to the primary receptor CD4. This interaction induces a structural rearrangement creating a high affinity binding site for a chemokine coreceptor like CXCR4 and/or CCR5. Acts as a ligand for CD209/DC-SIGN and CLEC4M/DC-SIGNR, which are respectively found on dendritic cells (DCs), and on endothelial cells of liver sinusoids and lymph node sinuses. These interactions allow capture of viral particles at mucosal surfaces by these cells and subsequent transmission to permissive cells. HIV subverts the migration properties of dendritic cells to gain access to CD4+ T-cells in lymph nodes. Virus transmission to permissive T-cells occurs either in trans (without DCs infection, through viral capture and transmission), or in cis (following DCs productive infection, through the usual CD4-gp120 interaction), thereby inducing a robust infection. In trans infection, bound virions remain infectious over days and it is proposed that they are not degraded, but protected in non-lysosomal acidic organelles within the DCs close to the cell membrane thus contributing to the viral infectious potential during DCs' migration from the periphery to the lymphoid tissues. On arrival at lymphoid tissues, intact virions recycle back to DCs' cell surface allowing virus transmission to CD4+ T-cells. In terms of biological role, acts as a class I viral fusion protein. Under the current model, the protein has at least 3 conformational states: pre-fusion native state, pre-hairpin intermediate state, and post-fusion hairpin state. During fusion of viral and target intracellular membranes, the coiled coil regions (heptad repeats) assume a trimer-of-hairpins structure, positioning the fusion peptide in close proximity to the C-terminal region of the ectodomain. The formation of this structure appears to drive apposition and subsequent fusion of viral and target cell membranes. Complete fusion occurs in host cell endosomes and is dynamin-dependent, however some lipid transfer might occur at the plasma membrane. The virus undergoes clathrin-dependent internalization long before endosomal fusion, thus minimizing the surface exposure of conserved viral epitopes during fusion and reducing the efficacy of inhibitors targeting these epitopes. Membranes fusion leads to delivery of the nucleocapsid into the cytoplasm. This Human immunodeficiency virus type 1 group M subtype B (isolate SF33) (HIV-1) protein is Envelope glycoprotein gp160.